Reading from the N-terminus, the 138-residue chain is uncharacterized protein (138 aa).

Residues 1–35 (MVAPAARVFLRAVRAALTSTVPDLLCLLARGSPRG) form the signal peptide.

In terms of tissue distribution, isoform 1 is highly expressed in small intestine, testis and kidney, medium expressed in brain and heart and low expressed in colon; it could not be detected in liver, adrenal gland and pancreas.

It localises to the secreted. This is an uncharacterized protein from Homo sapiens (Human).